The sequence spans 595 residues: UvrABC system protein C (595 aa).

One can recognise a GIY-YIG domain in the interval 14 to 91 (DSPGCYIHKD…IQENKPKYNI (78 aa)). Residues 196–231 (DKIVNELRDKMTKASELMEFERAAEYRDLIEGIGLL) enclose the UVR domain.

Belongs to the UvrC family. As to quaternary structure, interacts with UvrB in an incision complex.

The protein localises to the cytoplasm. The UvrABC repair system catalyzes the recognition and processing of DNA lesions. UvrC both incises the 5' and 3' sides of the lesion. The N-terminal half is responsible for the 3' incision and the C-terminal half is responsible for the 5' incision. This is UvrABC system protein C from Streptococcus mutans serotype c (strain ATCC 700610 / UA159).